We begin with the raw amino-acid sequence, 135 residues long: Large ribosomal subunit protein uL16c (135 aa).

It belongs to the universal ribosomal protein uL16 family. Part of the 50S ribosomal subunit.

It is found in the plastid. Its subcellular location is the chloroplast. The polypeptide is Large ribosomal subunit protein uL16c (Aethionema cordifolium (Lebanon stonecress)).